The sequence spans 545 residues: MAIMKKFIHHSLKQLIKPNLTSTKRVVSTSPRKEQGVAAISLEPSEMAQCPFRKSIDTFTETTNAVKAPGMTEVQPFERIPGPKGLPIVGTLFDYFKKDGPKFSKMFEVYRQRALEFGNIYYEKVGHFHCVVISSPGEYSRLVHAERQYPNRREMVPIAYYRKQKGFDLGVVNSQGEEWYRQRTVVSKKMLKLAEVSNFSTQMGEVSDDFVKRLSHVRDSHGEIPALERELFKWAMESIGTFLFEERIGCLGQETSPMAQTFIANLEGFFKTLQPLMYNLPTYKLWSTKLWKQFENYSDNVIDIGRSLVEKKWHPCKMEVTQNLHLISYLVNNGSMSTKEVTGLIVDLMLAAVETTSSATVWCLYNLAKNPQVQEKLFQEITEAQAKNNGTISAEDLCKLPMVKAVVKETLRLYPITYSTSRNIAEDMELGGYTIPAGTHVQANLYGMYRDPSLFPEPEGILPERWLRMNGSQMDATIKSTSQLVWGHGARMCLGRRIAEQEMHITLSKIIQNFTLSYNHDDVEPILNTMLTPDRPVRIEFKPRQ.

Cys493 contributes to the heme binding site.

Belongs to the cytochrome P450 family. The cofactor is heme. As to expression, abundantly expressed in the female gonadotropic hormone producing dorsal bodies.

Functionally, may be involved in the synthesis of the female gonadotropic hormone produced by the dorsal bodies. The chain is Cytochrome P450 10 (CYP10) from Lymnaea stagnalis (Great pond snail).